Consider the following 572-residue polypeptide: Proline--tRNA ligase (572 aa).

This sequence belongs to the class-II aminoacyl-tRNA synthetase family. ProS type 1 subfamily. As to quaternary structure, homodimer.

It is found in the cytoplasm. It carries out the reaction tRNA(Pro) + L-proline + ATP = L-prolyl-tRNA(Pro) + AMP + diphosphate. Its function is as follows. Catalyzes the attachment of proline to tRNA(Pro) in a two-step reaction: proline is first activated by ATP to form Pro-AMP and then transferred to the acceptor end of tRNA(Pro). As ProRS can inadvertently accommodate and process non-cognate amino acids such as alanine and cysteine, to avoid such errors it has two additional distinct editing activities against alanine. One activity is designated as 'pretransfer' editing and involves the tRNA(Pro)-independent hydrolysis of activated Ala-AMP. The other activity is designated 'posttransfer' editing and involves deacylation of mischarged Ala-tRNA(Pro). The misacylated Cys-tRNA(Pro) is not edited by ProRS. This Klebsiella pneumoniae subsp. pneumoniae (strain ATCC 700721 / MGH 78578) protein is Proline--tRNA ligase.